The primary structure comprises 37 residues: Large ribosomal subunit protein bL36 (37 aa).

Belongs to the bacterial ribosomal protein bL36 family.

The chain is Large ribosomal subunit protein bL36 from Alkalilimnicola ehrlichii (strain ATCC BAA-1101 / DSM 17681 / MLHE-1).